The chain runs to 525 residues: GMP synthase [glutamine-hydrolyzing] (525 aa).

A Glutamine amidotransferase type-1 domain is found at 9-207 (RILILDFGSQ…VRDICECEAL (199 aa)). Cys-86 functions as the Nucleophile in the catalytic mechanism. Catalysis depends on residues His-181 and Glu-183. The region spanning 208 to 400 (WTPAKIIDDA…LGLPYDMLYR (193 aa)) is the GMPS ATP-PPase domain. Residue 235–241 (SGGVDSS) participates in ATP binding.

As to quaternary structure, homodimer.

It carries out the reaction XMP + L-glutamine + ATP + H2O = GMP + L-glutamate + AMP + diphosphate + 2 H(+). It participates in purine metabolism; GMP biosynthesis; GMP from XMP (L-Gln route): step 1/1. In terms of biological role, catalyzes the synthesis of GMP from XMP. The protein is GMP synthase [glutamine-hydrolyzing] of Cronobacter sakazakii (strain ATCC BAA-894) (Enterobacter sakazakii).